The sequence spans 273 residues: Diphthine methyl ester synthase (273 aa).

S-adenosyl-L-methionine is bound by residues Leu10, Asp87, Gly90, 115–116 (SI), Leu166, Val224, and His249.

It belongs to the diphthine synthase family.

The catalysed reaction is 2-[(3S)-amino-3-carboxypropyl]-L-histidyl-[translation elongation factor 2] + 4 S-adenosyl-L-methionine = diphthine methyl ester-[translation elongation factor 2] + 4 S-adenosyl-L-homocysteine + 3 H(+). It functions in the pathway protein modification; peptidyl-diphthamide biosynthesis. In terms of biological role, S-adenosyl-L-methionine-dependent methyltransferase that catalyzes four methylations of the modified target histidine residue in translation elongation factor 2 (EF-2), to form an intermediate called diphthine methyl ester. The four successive methylation reactions represent the second step of diphthamide biosynthesis. This Dictyostelium discoideum (Social amoeba) protein is Diphthine methyl ester synthase (dph5).